A 436-amino-acid polypeptide reads, in one-letter code: Citrate synthase (436 aa).

Active-site residues include histidine 313 and aspartate 371.

It belongs to the citrate synthase family. Homohexamer.

It catalyses the reaction oxaloacetate + acetyl-CoA + H2O = citrate + CoA + H(+). Its pathway is carbohydrate metabolism; tricarboxylic acid cycle; isocitrate from oxaloacetate: step 1/2. The chain is Citrate synthase (aarA) from Acetobacter aceti.